The primary structure comprises 428 residues: Chaperone SurA (428 aa).

An N-terminal signal peptide occupies residues Met1–Ser19. 2 PpiC domains span residues Ser170–Asp268 and Val277–Asp377.

It localises to the periplasm. It carries out the reaction [protein]-peptidylproline (omega=180) = [protein]-peptidylproline (omega=0). Its function is as follows. Chaperone involved in the correct folding and assembly of outer membrane proteins. Recognizes specific patterns of aromatic residues and the orientation of their side chains, which are found more frequently in integral outer membrane proteins. May act in both early periplasmic and late outer membrane-associated steps of protein maturation. This chain is Chaperone SurA, found in Vibrio vulnificus (strain YJ016).